We begin with the raw amino-acid sequence, 151 residues long: Large ribosomal subunit protein uL30 (151 aa).

The protein belongs to the universal ribosomal protein uL30 family. Part of the 50S ribosomal subunit.

The polypeptide is Large ribosomal subunit protein uL30 (Methanothrix thermoacetophila (strain DSM 6194 / JCM 14653 / NBRC 101360 / PT) (Methanosaeta thermophila)).